A 354-amino-acid chain; its full sequence is Cellular communication network factor 6 (354 aa).

An N-terminal signal peptide occupies residues 1–23; sequence MQGLLFSTLLLAGLAQFCCRVQG. Residues 44-117 form the IGFBP N-terminal domain; the sequence is RKQFCHWPCK…RYETGVCAYL (74 aa). 6 cysteine pairs are disulfide-bonded: C48/C72, C52/C74, C54/C75, C61/C78, C86/C100, and C92/C114. N-linked (GlcNAc...) asparagine glycosylation occurs at N178. A TSP type-1 domain is found at 208 to 253; the sequence is KCLVQATKWTPCSRTCGMGISNRVTNENSNCEMRKEKRLCYIQPCD. 5 disulfide bridges follow: C268/C305, C285/C319, C296/C335, C299/C337, and C304/C341. Residues 268–342 enclose the CTCK domain; that stretch reads CQPTFQLSKA…TSCVCQRNCR (75 aa). N-linked (GlcNAc...) asparagine glycosylation is present at N308.

It belongs to the CCN family. As to expression, predominant expression in adult kidney and testis and fetal kidney. Weaker expression found in placenta, ovary, prostate and small intestine. Also expressed in skeletally-derived cells such as synoviocytes and articular cartilage chondrocytes.

Its subcellular location is the secreted. It is found in the mitochondrion. Plays a role in mitochondrial electron transport and mitochondrial respiration. Through its regulation of the mitochondrial function may play a role in normal postnatal skeletal growth and cartilage homeostasis. The chain is Cellular communication network factor 6 from Homo sapiens (Human).